The sequence spans 153 residues: Ribosome maturation factor RimP (153 aa).

The protein belongs to the RimP family.

Its subcellular location is the cytoplasm. In terms of biological role, required for maturation of 30S ribosomal subunits. This Glaesserella parasuis serovar 5 (strain SH0165) (Haemophilus parasuis) protein is Ribosome maturation factor RimP.